Consider the following 954-residue polypeptide: Chromosomal passenger complex protein BIR1 (954 aa).

BIR repeat units lie at residues 20-117 (RLRT…LLIY) and 153-241 (RKFT…YFFQ). Zn(2+)-binding residues include Cys208, Cys211, His228, and Cys237. Residues 375 to 419 (NVQLTQSSSPIKKKRKFKRISPRKIFDEEDSEHSLNNNSANGDNK) are disordered. Over residues 385–396 (IKKKRKFKRISP) the composition is skewed to basic residues. Ser477, Ser508, and Ser552 each carry phosphoserine. 2 disordered regions span residues 541–645 (DIDR…SGKV) and 661–685 (FSAS…ISTP). A compositionally biased stretch (basic and acidic residues) spans 556 to 583 (PKTHELIRDNSEKREAQNGEFRHQKDST). Phosphoserine is present on Ser587. Residues 593 to 604 (SNKSGDNSSNIT) are compositionally biased toward polar residues. Phosphoserine is present on residues Ser751 and Ser765. The segment at 798–839 (LVSGTSSYPRNSRLEEQRKETSTSLADNSKKGSSFNEGNNEK) is disordered. The span at 809–818 (SRLEEQRKET) shows a compositional bias: basic and acidic residues. Residues 819-835 (STSLADNSKKGSSFNEG) are compositionally biased toward polar residues.

Component of the CPC complex at least composed of IPL1, BIR1 and SLI15. Interacts with CBF2/NDC10. Interacts with CBF3D/SKP1.

In terms of biological role, component of the chromosomal passenger complex (CPC), a complex that acts as a key regulator of chromosome segregation and cytokinesis. This Saccharomyces cerevisiae (strain ATCC 204508 / S288c) (Baker's yeast) protein is Chromosomal passenger complex protein BIR1 (BIR1).